The following is a 109-amino-acid chain: DNA-binding protein Mpal_0536 (109 aa).

Positions 14 to 35 are disordered; it reads MAQLQSQQMDQQQMDEEKQRAK. Residues 16–25 show a composition bias toward low complexity; sequence QLQSQQMDQQ.

The protein belongs to the PDCD5 family.

The protein is DNA-binding protein Mpal_0536 of Methanosphaerula palustris (strain ATCC BAA-1556 / DSM 19958 / E1-9c).